A 205-amino-acid chain; its full sequence is Small ribosomal subunit protein uS4 (205 aa).

In terms of domain architecture, S4 RNA-binding spans 91-149 (MRLDALVLRAAFARSISQARQLVVHRHILVDGKLVDRPSYSVSPGQTVKVKPKSVPLDP).

It belongs to the universal ribosomal protein uS4 family. Part of the 30S ribosomal subunit. Contacts protein S5. The interaction surface between S4 and S5 is involved in control of translational fidelity.

One of the primary rRNA binding proteins, it binds directly to 16S rRNA where it nucleates assembly of the body of the 30S subunit. In terms of biological role, with S5 and S12 plays an important role in translational accuracy. This is Small ribosomal subunit protein uS4 from Tropheryma whipplei (strain TW08/27) (Whipple's bacillus).